Reading from the N-terminus, the 83-residue chain is Cytochrome b559 subunit alpha (83 aa).

Residues 21–35 form a helical membrane-spanning segment; it reads VIHSITIPSLFIAGW. Residue H23 participates in heme binding.

This sequence belongs to the PsbE/PsbF family. Heterodimer of an alpha subunit and a beta subunit. PSII is composed of 1 copy each of membrane proteins PsbA, PsbB, PsbC, PsbD, PsbE, PsbF, PsbH, PsbI, PsbJ, PsbK, PsbL, PsbM, PsbT, PsbX, PsbY, PsbZ, Psb30/Ycf12, at least 3 peripheral proteins of the oxygen-evolving complex and a large number of cofactors. It forms dimeric complexes. Heme b serves as cofactor.

The protein resides in the plastid. It localises to the chloroplast thylakoid membrane. This b-type cytochrome is tightly associated with the reaction center of photosystem II (PSII). PSII is a light-driven water:plastoquinone oxidoreductase that uses light energy to abstract electrons from H(2)O, generating O(2) and a proton gradient subsequently used for ATP formation. It consists of a core antenna complex that captures photons, and an electron transfer chain that converts photonic excitation into a charge separation. This chain is Cytochrome b559 subunit alpha, found in Tupiella akineta (Green alga).